Consider the following 347-residue polypeptide: Acetylglutamate kinase, chloroplastic (347 aa).

A chloroplast-targeting transit peptide spans 1-50; it reads MATVTSNASPKSFSFTVSNPFKTLIPNKSPSLCYPTRNKNHHRLGFSIKA. Threonine 51 is modified (N-acetylthreonine). 94 to 95 serves as a coordination point for ATP; it reads GA. N-acetyl-L-glutamate-binding positions include glycine 126, arginine 148, and 242–245; that span reads NINA. Residue lysine 260 participates in L-arginine binding. ATP-binding positions include 265 to 266 and leucine 271; that span reads TD. Lysine 282 serves as a coordination point for L-arginine. 297–305 is a binding site for ATP; the sequence is KVAGGMIPK. L-arginine contacts are provided by residues 334-337 and glycine 342; that span reads EIMS.

It belongs to the acetylglutamate kinase family. ArgB subfamily. Interacts with GLB1. Interaction is dependent of MgATP and inhibited by 2-oxoglutarate, arginine, glutamate, citrate, and oxaloacetate.

It localises to the plastid. It is found in the chloroplast stroma. The catalysed reaction is N-acetyl-L-glutamate + ATP = N-acetyl-L-glutamyl 5-phosphate + ADP. It participates in amino-acid biosynthesis; L-arginine biosynthesis; N(2)-acetyl-L-ornithine from L-glutamate: step 2/4. Inhibited by arginine. Inhibition is relieved by binding to GLB1. Involved in the arginine biosynthetic pathway via the intermediate compound ornithine. This Arabidopsis thaliana (Mouse-ear cress) protein is Acetylglutamate kinase, chloroplastic.